We begin with the raw amino-acid sequence, 349 residues long: Threonine-rich protein (349 aa).

The signal sequence occupies residues 1–19 (MKGLTLACIAATVVAASHA). A glycan (N-linked (GlcNAc...) asparagine) is linked at N257. Residues 300–326 (QPDVSPMSVRKRRQAESAEEDDDLVGD) form a disordered region. The span at 316-326 (SAEEDDDLVGD) shows a compositional bias: acidic residues. The stretch at 316–349 (SAEEDDDLVGDMEDLKELEQEIQEALEEVEKLDV) forms a coiled coil.

As to expression, component of the acid-insoluble and acid-soluble organic matrix of calcified layers of the shell (at protein level).

It is found in the secreted. This is Threonine-rich protein from Lottia gigantea (Giant owl limpet).